The sequence spans 91 residues: MKRVSMIVSGQVQGVGFRYYVQDIAEDMRITGWVRNLPDGTVEIDAEGKTDVLETFIRTISNTRQGAIQVRNVHVQEKEVCGYSIFTIRRD.

An Acylphosphatase-like domain is found at 3-90 (RVSMIVSGQV…CGYSIFTIRR (88 aa)). Residues R18 and N36 contribute to the active site.

This sequence belongs to the acylphosphatase family.

It catalyses the reaction an acyl phosphate + H2O = a carboxylate + phosphate + H(+). This Methanospirillum hungatei JF-1 (strain ATCC 27890 / DSM 864 / NBRC 100397 / JF-1) protein is Acylphosphatase (acyP).